A 341-amino-acid polypeptide reads, in one-letter code: MPVKCSSCEEWRAVLRRPKTGHSLCKDCFFYAFEEEIHNTIVSAKLFHPGEKVGIGASGGKDSTVLAHVMKVLNERYAYGLDLILLSVDEGISGYRDDSLQTVKRNQQQYELPLKIVSYLELYGWTMDQIVKQVGLKNNCTFCGVFRRQALDRGAMMLGINKICTGHNADDIAETVLMNFLRGDIARLRRCTAITTGSEGAIPRCKPLKYTYEKEIVLYAYFKKLDYFSTECIYSPNAYRGHARVFLKDLEAIRPSSIIDIIHSGENLSVNEDVRMPVQGTCTRCGYISSQSLCKACVLLEGLNRGLPKLGIGKHHKLHHKLLSQEPLSEQEERKLRAVVH.

Belongs to the TtcA family. CTU1/NCS6/ATPBD3 subfamily.

Its subcellular location is the cytoplasm. It functions in the pathway tRNA modification; 5-methoxycarbonylmethyl-2-thiouridine-tRNA biosynthesis. Its function is as follows. Plays a central role in 2-thiolation of mcm(5)S(2)U at tRNA wobble positions of tRNA(Lys), tRNA(Glu) and tRNA(Gln). Directly binds tRNAs and probably acts by catalyzing adenylation of tRNAs, an intermediate required for 2-thiolation. It is unclear whether it acts as a sulfurtransferase that transfers sulfur from thiocarboxylated urm1 onto the uridine of tRNAs at wobble position. In Xenopus laevis (African clawed frog), this protein is Cytoplasmic tRNA 2-thiolation protein 1 (ctu1).